The chain runs to 812 residues: DNA translocase FtsK 1 (812 aa).

Basic residues predominate over residues 1–11; it reads MTEKSHKKTAK. A disordered region spans residues 1–36; that stretch reads MTEKSHKKTAKGRAGSPSPTSARNKKADNGARGNKV. Residues 25–36 are compositionally biased toward basic and acidic residues; that stretch reads KKADNGARGNKV. A run of 5 helical transmembrane segments spans residues 63-83, 116-136, 156-176, 184-204, and 210-230; these read IGDALWLMGLAATLYLVISLI, VGYYLFGWSFWWWIAAACVML, IAAAALFVLTVFSPVLEYFVL, LPVGAGGMVGIRVGAVFAWLL, and LLIILVVLLLSLSLLVQISWL. Topologically, residues 231 to 812 are cytoplasmic; it reads EFLNGAGRAV…RKILAHKDHL (582 aa). The FtsK domain maps to 461-670; that stretch reads GTPVVGDLAK…FTVQSKIDSR (210 aa). 481–486 lines the ATP pocket; sequence GSGKSV.

It belongs to the FtsK/SpoIIIE/SftA family. In terms of assembly, homohexamer. Forms a ring that surrounds DNA.

It is found in the cell inner membrane. In terms of biological role, essential cell division protein that coordinates cell division and chromosome segregation. The N-terminus is involved in assembly of the cell-division machinery. The C-terminus functions as a DNA motor that moves dsDNA in an ATP-dependent manner towards the dif recombination site, which is located within the replication terminus region. Translocation stops specifically at Xer-dif sites, where FtsK interacts with the Xer recombinase, allowing activation of chromosome unlinking by recombination. FtsK orienting polar sequences (KOPS) guide the direction of DNA translocation. FtsK can remove proteins from DNA as it translocates, but translocation stops specifically at XerCD-dif site, thereby preventing removal of XerC and XerD from dif. This Neisseria meningitidis serogroup A / serotype 4A (strain DSM 15465 / Z2491) protein is DNA translocase FtsK 1 (ftsK1).